Reading from the N-terminus, the 158-residue chain is Acetolactate synthase small subunit (158 aa).

One can recognise an ACT domain in the interval 4–78; it reads ILSVLLENES…DVLRVIKVGQ (75 aa).

The protein belongs to the acetolactate synthase small subunit family. In terms of assembly, dimer of large and small chains.

The enzyme catalyses 2 pyruvate + H(+) = (2S)-2-acetolactate + CO2. It participates in amino-acid biosynthesis; L-isoleucine biosynthesis; L-isoleucine from 2-oxobutanoate: step 1/4. Its pathway is amino-acid biosynthesis; L-valine biosynthesis; L-valine from pyruvate: step 1/4. This Buchnera aphidicola subsp. Schizaphis graminum (strain Sg) protein is Acetolactate synthase small subunit (ilvH).